We begin with the raw amino-acid sequence, 794 residues long: Phenylalanine--tRNA ligase beta subunit (794 aa).

Residues 40–158 (NSLNSELILG…LKKYIGSDVK (119 aa)) form the tRNA-binding domain. The 76-residue stretch at 402–477 (KNKQSLEIKL…RLYSYDKIDE (76 aa)) folds into the B5 domain. 4 residues coordinate Mg(2+): Asp-455, Asp-461, Glu-464, and Glu-465. Residues 702 to 794 (SKFQSSSRDL…NIKQMKVVIR (93 aa)) enclose the FDX-ACB domain.

The protein belongs to the phenylalanyl-tRNA synthetase beta subunit family. Type 1 subfamily. In terms of assembly, tetramer of two alpha and two beta subunits. It depends on Mg(2+) as a cofactor.

The protein resides in the cytoplasm. It carries out the reaction tRNA(Phe) + L-phenylalanine + ATP = L-phenylalanyl-tRNA(Phe) + AMP + diphosphate + H(+). In Mycoplasma mycoides subsp. mycoides SC (strain CCUG 32753 / NCTC 10114 / PG1), this protein is Phenylalanine--tRNA ligase beta subunit.